Consider the following 290-residue polypeptide: RIO-type serine/threonine-protein kinase Rio1 (290 aa).

Residues Met-1–Glu-22 are disordered. A compositionally biased stretch (acidic residues) spans Gln-11–Glu-22. In terms of domain architecture, Protein kinase spans Asp-79 to Glu-290. ATP contacts are provided by residues Ile-85 to Val-93, Lys-107, Glu-175, and Val-177. The active-site Proton acceptor is Asp-218. Residues Asn-223 and Asp-235 each contribute to the Mg(2+) site. Asp-235 (4-aspartylphosphate intermediate) is an active-site residue.

It belongs to the protein kinase superfamily. RIO-type Ser/Thr kinase family. Requires Mg(2+) as cofactor. The cofactor is Mn(2+). Autophosphorylated.

The catalysed reaction is L-seryl-[protein] + ATP = O-phospho-L-seryl-[protein] + ADP + H(+). It catalyses the reaction L-threonyl-[protein] + ATP = O-phospho-L-threonyl-[protein] + ADP + H(+). It carries out the reaction ATP + H2O = ADP + phosphate + H(+). In terms of biological role, serine/threonine-protein kinase that is able to autophosphorylate as well as to phosphorylate proteasome subunit alpha 1 (PsmA1) in vitro. Despite the protein kinase domain is proposed to act predominantly as an ATPase. The polypeptide is RIO-type serine/threonine-protein kinase Rio1 (rio1) (Haloferax volcanii (strain ATCC 29605 / DSM 3757 / JCM 8879 / NBRC 14742 / NCIMB 2012 / VKM B-1768 / DS2) (Halobacterium volcanii)).